The following is a 274-amino-acid chain: uncharacterized protein (274 aa).

Positions 3–141 constitute a C2 NT-type domain; it reads IFIPKARRPT…TIRIGISLKQ (139 aa).

It to yeast YBL086c.

This is an uncharacterized protein from Schizosaccharomyces pombe (strain 972 / ATCC 24843) (Fission yeast).